Here is a 2988-residue protein sequence, read N- to C-terminus: NBPF family member NBPF14 (2988 aa).

Positions 75–119 (RQFKEEKLAEQLKQAEELRQYKVLVHSQERELTQLREKLREGRDA) form a coiled coil. Disordered stretches follow at residues 161–200 (KLSP…SKVP), 451–474 (EKVQ…PEDS), and 520–566 (WEDA…EGYS). Acidic residues predominate over residues 165-177 (ENDEDEDEDVQVE). 32 Olduvai domains span residues 165 to 259 (ENDE…NILP), 436 to 528 (ENDN…HIIP), 529 to 600 (ENES…VDIG), 601 to 692 (RHRW…PSCP), 695 to 750 (SREL…LDVD), 751 to 843 (RIKK…RSKK), 844 to 919 (ERRR…LDVD), 920 to 1012 (RIKK…RSKK), 1013 to 1105 (ERRR…PSCP), 1108 to 1163 (SREL…LDVD), 1164 to 1256 (RIKK…RSKK), 1257 to 1349 (ERRR…PSCP), 1352 to 1407 (SREL…LDVD), 1408 to 1500 (RIKK…RSKK), 1501 to 1593 (ERRR…PSCP), 1596 to 1651 (SREL…LDVD), 1652 to 1744 (RFKK…RSKK), 1745 to 1837 (ERRR…PSCP), 1840 to 1895 (SREL…LDVD), 1896 to 1988 (RIKK…RSKK), 1989 to 2081 (ERRR…PSCP), 2084 to 2139 (SREL…LDVD), 2140 to 2232 (RIKK…RSKK), 2233 to 2325 (ERRR…PSCP), 2328 to 2383 (SREL…LDVD), 2384 to 2476 (RIKK…RSKK), 2477 to 2569 (ERRR…PSCP), 2572 to 2627 (SREL…LDVD), 2628 to 2720 (RIKK…RSKK), 2721 to 2813 (ERRR…PSCP), 2816 to 2889 (SREL…RSKK), and 2890 to 2988 (ERRR…IFPQ). Positions 190-200 (EVQKAEESKVP) are enriched in basic and acidic residues. 2 stretches are compositionally biased toward acidic residues: residues 530–539 (NESDDEEEEE) and 550–562 (ESEE…ESWD). Disordered regions lie at residues 754 to 773 (KDEE…SREL), 828 to 871 (EKKG…LDEK), and 999 to 1038 (KGKG…ELLD). Basic residues-rich tracts occupy residues 831–849 (GKGK…RRGR) and 1000–1018 (GKGK…RRGR). Positions 1243–1282 (KGKGKKRRGRRSKKERRRGRKEGEEDQNPPCPRLSRELLD) are disordered. A compositionally biased stretch (basic residues) spans 1244-1262 (GKGKKRRGRRSKKERRRGR). The interval 1487-1521 (KGKGKKRRGRRSKKERRRGRKEGEEDQNPPCPRLS) is disordered. Over residues 1488–1506 (GKGKKRRGRRSKKERRRGR) the composition is skewed to basic residues. The segment at 1731-1770 (KGKGKKRRGRRSKKERRRGRKEGEEDQNPPCPRLSRELLD) is disordered. Residues 1732–1750 (GKGKKRRGRRSKKERRRGR) are compositionally biased toward basic residues. A disordered region spans residues 1975-2014 (KGKGKKRRGRRSKKERRRGRKEGEEDQNPPCPRLSRELLD). Residues 1976 to 1994 (GKGKKRRGRRSKKERRRGR) are compositionally biased toward basic residues. Residues 2219 to 2258 (KGKGKKRRGRRSKKERRRGRKEGEEDQNPPCPRLSRELLD) form a disordered region. A compositionally biased stretch (basic residues) spans 2220 to 2238 (GKGKKRRGRRSKKERRRGR). The disordered stretch occupies residues 2463–2502 (KGKGKKRRGRRSKKERRRGRKEGEEDQNPPCPRLSRELLD). Residues 2464–2482 (GKGKKRRGRRSKKERRRGR) show a composition bias toward basic residues. 2 disordered regions span residues 2707 to 2745 (KGKG…RELL) and 2877 to 2909 (GKGK…CPRL). Basic residues-rich tracts occupy residues 2708–2726 (GKGK…RRGR) and 2877–2895 (GKGK…RRGR).

The protein belongs to the NBPF family. Expressed in spleen and fetal liver.

The protein localises to the cytoplasm. This is NBPF family member NBPF14 from Homo sapiens (Human).